Consider the following 295-residue polypeptide: MSARIIDGKVISAELRARVAAEVTRIKTDHGITPGLAVVLVGADPASEVYVRSKHKQTQEAGMASFEHRLPADVPQAELLALIAKLNADPTVHGILVQLPLPKGLDSNAVIDAIDPAKDVDGLNPVNAGRLASGLFALTPCTPLGCIIMAKQVHASLEGMNAIVVGRSNLVGKPLVQLLLNENATVTIAHSRSRDLPALCRQADLVFAAVGKPEMIRGDWIKPGATVIDVGINRTPSPDGGKDKLVGDVAFAEAKEVAGAITPVPGGVGLMTVACLLVNTVRAASAIHGLPKPAV.

Residues 166–168, Ser-191, and Ile-232 each bind NADP(+); that span reads GRS.

This sequence belongs to the tetrahydrofolate dehydrogenase/cyclohydrolase family. As to quaternary structure, homodimer.

The catalysed reaction is (6R)-5,10-methylene-5,6,7,8-tetrahydrofolate + NADP(+) = (6R)-5,10-methenyltetrahydrofolate + NADPH. The enzyme catalyses (6R)-5,10-methenyltetrahydrofolate + H2O = (6R)-10-formyltetrahydrofolate + H(+). It functions in the pathway one-carbon metabolism; tetrahydrofolate interconversion. Functionally, catalyzes the oxidation of 5,10-methylenetetrahydrofolate to 5,10-methenyltetrahydrofolate and then the hydrolysis of 5,10-methenyltetrahydrofolate to 10-formyltetrahydrofolate. The protein is Bifunctional protein FolD of Rhodopseudomonas palustris (strain BisA53).